We begin with the raw amino-acid sequence, 243 residues long: Ubiquinone biosynthesis O-methyltransferase (243 aa).

Residues R44, G64, D85, and M129 each contribute to the S-adenosyl-L-methionine site.

This sequence belongs to the methyltransferase superfamily. UbiG/COQ3 family.

It carries out the reaction a 3-demethylubiquinol + S-adenosyl-L-methionine = a ubiquinol + S-adenosyl-L-homocysteine + H(+). The catalysed reaction is a 3-(all-trans-polyprenyl)benzene-1,2-diol + S-adenosyl-L-methionine = a 2-methoxy-6-(all-trans-polyprenyl)phenol + S-adenosyl-L-homocysteine + H(+). It functions in the pathway cofactor biosynthesis; ubiquinone biosynthesis. Its function is as follows. O-methyltransferase that catalyzes the 2 O-methylation steps in the ubiquinone biosynthetic pathway. In Erwinia tasmaniensis (strain DSM 17950 / CFBP 7177 / CIP 109463 / NCPPB 4357 / Et1/99), this protein is Ubiquinone biosynthesis O-methyltransferase.